The chain runs to 208 residues: Protein-L-isoaspartate O-methyltransferase (208 aa).

Serine 59 is an active-site residue.

This sequence belongs to the methyltransferase superfamily. L-isoaspartyl/D-aspartyl protein methyltransferase family.

It localises to the cytoplasm. The enzyme catalyses [protein]-L-isoaspartate + S-adenosyl-L-methionine = [protein]-L-isoaspartate alpha-methyl ester + S-adenosyl-L-homocysteine. In terms of biological role, catalyzes the methyl esterification of L-isoaspartyl residues in peptides and proteins that result from spontaneous decomposition of normal L-aspartyl and L-asparaginyl residues. It plays a role in the repair and/or degradation of damaged proteins. This Escherichia coli (strain K12 / MC4100 / BW2952) protein is Protein-L-isoaspartate O-methyltransferase.